We begin with the raw amino-acid sequence, 357 residues long: Neurogenic differentiation factor 1 (357 aa).

The tract at residues 1-94 is disordered; sequence MTKSYSESGL…GPKKKKMTKA (94 aa). A compositionally biased stretch (acidic residues) spans 58–78; sequence EEEDEDEDLEEEEEEEEEEDD. The span at 81–93 shows a compositional bias: basic residues; sequence PKRRGPKKKKMTK. A Nuclear localization signal motif is present at residues 87 to 93; it reads KKKKMTK. The region spanning 101–153 is the bHLH domain; that stretch reads LRRMKANARERNRMHGLNAALDNLRKVVPCYSKTQKLSKIETLRLAKNYIWAL. Ser162, Ser259, Ser266, and Ser274 each carry phosphoserine. At Ser336 the chain carries Phosphoserine; by CaMK2.

Efficient DNA-binding requires dimerization with another bHLH protein. Heterodimer with TCF3/E47; the heterodimer is inhibited in presence of ID2, but not NR0B2, to E-box element. Interacts with EP300; the interaction is inhibited by NR0B2. Interacts with RREB1. Interacts with ATOH8. Post-translationally, phosphorylated by MAPK1; phosphorylation regulates heterodimerization and DNA-binding activities. Phosphorylation on Ser-266 and Ser-274 increases transactivation on the insulin promoter in glucose-stimulated insulinoma cells. Phosphorylated. In islet cells, phosphorylated on Ser-274 upon glucose stimulation; which may be required for nuclear localization. In activated neurons, phosphorylated on Ser-336 by CaMK2; which promotes dendritic growth.

The protein resides in the cytoplasm. Its subcellular location is the nucleus. Functionally, acts as a transcriptional activator: mediates transcriptional activation by binding to E box-containing promoter consensus core sequences 5'-CANNTG-3'. Associates with the p300/CBP transcription coactivator complex to stimulate transcription of the secretin gene as well as the gene encoding the cyclin-dependent kinase inhibitor CDKN1A. Contributes to the regulation of several cell differentiation pathways, like those that promote the formation of early retinal ganglion cells, inner ear sensory neurons, granule cells forming either the cerebellum or the dentate gyrus cell layer of the hippocampus, endocrine islet cells of the pancreas and enteroendocrine cells of the small intestine. Together with PAX6 or SIX3, is required for the regulation of amacrine cell fate specification. Also required for dendrite morphogenesis and maintenance in the cerebellar cortex. Associates with chromatin to enhancer regulatory elements in genes encoding key transcriptional regulators of neurogenesis. In Rattus norvegicus (Rat), this protein is Neurogenic differentiation factor 1 (Neurod1).